The primary structure comprises 141 residues: Ribonuclease VapC38 (141 aa).

Positions 5 and 102 each coordinate Mg(2+).

The protein belongs to the PINc/VapC protein family. Mg(2+) is required as a cofactor.

The protein localises to the secreted. Functionally, toxic component of a type II toxin-antitoxin (TA) system. An RNase. Its cognate antitoxin is VapB38. The chain is Ribonuclease VapC38 from Mycobacterium tuberculosis (strain ATCC 25618 / H37Rv).